Here is a 373-residue protein sequence, read N- to C-terminus: Probable tRNA sulfurtransferase (373 aa).

Positions 54 to 158 (NKNIEELSKV…NDVAYFYHKI (105 aa)) constitute a THUMP domain. ATP is bound by residues 176–177 (LF), 201–202 (NF), K256, G278, and Q287.

This sequence belongs to the ThiI family.

It localises to the cytoplasm. It carries out the reaction [ThiI sulfur-carrier protein]-S-sulfanyl-L-cysteine + a uridine in tRNA + 2 reduced [2Fe-2S]-[ferredoxin] + ATP + H(+) = [ThiI sulfur-carrier protein]-L-cysteine + a 4-thiouridine in tRNA + 2 oxidized [2Fe-2S]-[ferredoxin] + AMP + diphosphate. The enzyme catalyses [ThiS sulfur-carrier protein]-C-terminal Gly-Gly-AMP + S-sulfanyl-L-cysteinyl-[cysteine desulfurase] + AH2 = [ThiS sulfur-carrier protein]-C-terminal-Gly-aminoethanethioate + L-cysteinyl-[cysteine desulfurase] + A + AMP + 2 H(+). It participates in cofactor biosynthesis; thiamine diphosphate biosynthesis. Catalyzes the ATP-dependent transfer of a sulfur to tRNA to produce 4-thiouridine in position 8 of tRNAs, which functions as a near-UV photosensor. Also catalyzes the transfer of sulfur to the sulfur carrier protein ThiS, forming ThiS-thiocarboxylate. This is a step in the synthesis of thiazole, in the thiamine biosynthesis pathway. The sulfur is donated as persulfide by IscS. The protein is Probable tRNA sulfurtransferase of Saccharolobus islandicus (strain M.16.27) (Sulfolobus islandicus).